A 426-amino-acid polypeptide reads, in one-letter code: tRNA (guanine(37)-N(1))-methyltransferase (426 aa).

S-adenosyl-L-methionine-binding positions include H203, 242-243, 269-270, and N292; these read DL and DA. The disordered stretch occupies residues 374–426; that stretch reads RISFKMPTLKKRKDTENNDDQENNNNSSNNNNNNKIDYNEAVSSGGEGKKIKH. The segment covering 396–407 has biased composition (low complexity); it reads NNNNSSNNNNNN.

It belongs to the class I-like SAM-binding methyltransferase superfamily. TRM5/TYW2 family. As to quaternary structure, monomer.

The protein localises to the mitochondrion matrix. It localises to the nucleus. It is found in the cytoplasm. The catalysed reaction is guanosine(37) in tRNA + S-adenosyl-L-methionine = N(1)-methylguanosine(37) in tRNA + S-adenosyl-L-homocysteine + H(+). Its function is as follows. Specifically methylates the N1 position of guanosine-37 in various cytoplasmic and mitochondrial tRNAs. Methylation is not dependent on the nature of the nucleoside 5' of the target nucleoside. This is the first step in the biosynthesis of wybutosine (yW), a modified base adjacent to the anticodon of tRNAs and required for accurate decoding. The polypeptide is tRNA (guanine(37)-N(1))-methyltransferase (trmt5) (Heterostelium pallidum (strain ATCC 26659 / Pp 5 / PN500) (Cellular slime mold)).